A 179-amino-acid chain; its full sequence is MTLASAEKEMAGVLTFFQKETRGFRTGKAHPALVETVTVEVYGTTMRLSDIASISVSDMRQLLISPYDAGTVSAISKGILAANLNLQPIVEGATVRINVPEPTEEYRREVIKQLKRKSEEAKVAIRNIRRTFNDRLKKDDNLTEDAVKSLEKKIQELTDKFCKQIEELAKQKEAELATV.

This sequence belongs to the RRF family.

The protein localises to the cytoplasm. Functionally, responsible for the release of ribosomes from messenger RNA at the termination of protein biosynthesis. May increase the efficiency of translation by recycling ribosomes from one round of translation to another. This is Ribosome-recycling factor from Chlamydia trachomatis serovar L2b (strain UCH-1/proctitis).